We begin with the raw amino-acid sequence, 243 residues long: Zinc import ATP-binding protein ZnuC (243 aa).

Residues 8-225 form the ABC transporter domain; sequence LNLSNVSYYI…SEFQKLFGHH (218 aa). Residue 40–47 coordinates ATP; that stretch reads GPNGAGKS.

Belongs to the ABC transporter superfamily. Zinc importer (TC 3.A.1.15.5) family. The complex is composed of two ATP-binding proteins (ZnuC), two transmembrane proteins (ZnuB) and a solute-binding protein (ZnuA).

The protein localises to the cell inner membrane. It catalyses the reaction Zn(2+)(out) + ATP(in) + H2O(in) = Zn(2+)(in) + ADP(in) + phosphate(in) + H(+)(in). In terms of biological role, part of the ABC transporter complex ZnuABC involved in zinc import. Responsible for energy coupling to the transport system. In Psychrobacter arcticus (strain DSM 17307 / VKM B-2377 / 273-4), this protein is Zinc import ATP-binding protein ZnuC.